The sequence spans 397 residues: KNASPDDLKKAYRKAAIKNHPDKGGDPEKFKELAQAYDVLSDPEKREIYDQYGEDALKEGMGGGGGDHDPFDIFQSFFGGGGFGGGGSSRGRRQRRGEDVVHPLKVSLEELYNGTSKKLSLSRNVICSKCNGKGSKSGASMRCASCQGSGMKVSIRQLGPGMIQQMQHPCNDCKGTGEMINDKDRCPLCKGEKVVQEKKVLEVHVEKGMQNGQRITFPGEADEAPDTVTGDIVFVLQQKEHPKFQRKGDDLFYKHTLSLTEALCGFQFVLTHLDGRQLLIKSNPGEVVKPDQFKAINDEGMPMYQRPFMRGKLYIQFLVDFPDSLTPDQCKVIESVLPRSASSQLTDMEIDECEETTMHDVNIEEEMRRKQHQHAQEAYDEDDEGHGGGQRVQCAQQ.

The J domain maps to 1–52; sequence KNASPDDLKKAYRKAAIKNHPDKGGDPEKFKELAQAYDVLSDPEKREIYDQY. The CR-type zinc finger occupies 114-198; sequence GTSKKLSLSR…CKGEKVVQEK (85 aa). 4 CXXCXGXG motif repeats span residues 127-134, 143-150, 170-177, and 186-193; these read CSKCNGKG, CASCQGSG, CNDCKGTG, and CPLCKGEK. The interval 367–397 is disordered; the sequence is MRRKQHQHAQEAYDEDDEGHGGGQRVQCAQQ. Cysteine 394 bears the Cysteine methyl ester mark. Cysteine 394 is lipidated: S-farnesyl cysteine. Residues 395 to 397 constitute a propeptide, removed in mature form; sequence AQQ.

The protein resides in the membrane. In terms of biological role, plays a continuous role in plant development probably in the structural organization of compartments. This chain is DnaJ protein homolog 1 (DNAJ1), found in Allium porrum (Leek).